The following is a 288-amino-acid chain: Elongation factor Ts (288 aa).

The interval Thr-82–Val-85 is involved in Mg(2+) ion dislocation from EF-Tu.

The protein belongs to the EF-Ts family.

It localises to the cytoplasm. Associates with the EF-Tu.GDP complex and induces the exchange of GDP to GTP. It remains bound to the aminoacyl-tRNA.EF-Tu.GTP complex up to the GTP hydrolysis stage on the ribosome. The polypeptide is Elongation factor Ts (Chlorobium phaeovibrioides (strain DSM 265 / 1930) (Prosthecochloris vibrioformis (strain DSM 265))).